We begin with the raw amino-acid sequence, 264 residues long: Thymidylate synthase (264 aa).

Arg-21 lines the dUMP pocket. Position 51 (His-51) interacts with (6R)-5,10-methylene-5,6,7,8-tetrahydrofolate. Position 126-127 (126-127 (RR)) interacts with dUMP. The active-site Nucleophile is the Cys-146. Residues 166-169 (RSAD), Asn-177, and 207-209 (HIY) each bind dUMP. Asp-169 provides a ligand contact to (6R)-5,10-methylene-5,6,7,8-tetrahydrofolate. Ala-263 contacts (6R)-5,10-methylene-5,6,7,8-tetrahydrofolate.

The protein belongs to the thymidylate synthase family. Bacterial-type ThyA subfamily. In terms of assembly, homodimer.

Its subcellular location is the cytoplasm. It carries out the reaction dUMP + (6R)-5,10-methylene-5,6,7,8-tetrahydrofolate = 7,8-dihydrofolate + dTMP. It functions in the pathway pyrimidine metabolism; dTTP biosynthesis. Catalyzes the reductive methylation of 2'-deoxyuridine-5'-monophosphate (dUMP) to 2'-deoxythymidine-5'-monophosphate (dTMP) while utilizing 5,10-methylenetetrahydrofolate (mTHF) as the methyl donor and reductant in the reaction, yielding dihydrofolate (DHF) as a by-product. This enzymatic reaction provides an intracellular de novo source of dTMP, an essential precursor for DNA biosynthesis. The chain is Thymidylate synthase from Brucella anthropi (strain ATCC 49188 / DSM 6882 / CCUG 24695 / JCM 21032 / LMG 3331 / NBRC 15819 / NCTC 12168 / Alc 37) (Ochrobactrum anthropi).